The sequence spans 157 residues: Large ribosomal subunit protein uL11 (157 aa).

Belongs to the universal ribosomal protein uL11 family.

This protein binds directly to 26S ribosomal RNA. This Chlamydomonas reinhardtii (Chlamydomonas smithii) protein is Large ribosomal subunit protein uL11 (RPL12).